We begin with the raw amino-acid sequence, 378 residues long: Lipoyl synthase, mitochondrial (378 aa).

7 residues coordinate [4Fe-4S] cluster: cysteine 97, cysteine 102, cysteine 108, cysteine 128, cysteine 132, cysteine 135, and serine 343. The Radical SAM core domain maps to 111-332 (GSDKSAATAT…RQRALDMGFL (222 aa)).

The protein belongs to the radical SAM superfamily. Lipoyl synthase family. [4Fe-4S] cluster is required as a cofactor.

It localises to the mitochondrion. It carries out the reaction [[Fe-S] cluster scaffold protein carrying a second [4Fe-4S](2+) cluster] + N(6)-octanoyl-L-lysyl-[protein] + 2 oxidized [2Fe-2S]-[ferredoxin] + 2 S-adenosyl-L-methionine + 4 H(+) = [[Fe-S] cluster scaffold protein] + N(6)-[(R)-dihydrolipoyl]-L-lysyl-[protein] + 4 Fe(3+) + 2 hydrogen sulfide + 2 5'-deoxyadenosine + 2 L-methionine + 2 reduced [2Fe-2S]-[ferredoxin]. The protein operates within protein modification; protein lipoylation via endogenous pathway; protein N(6)-(lipoyl)lysine from octanoyl-[acyl-carrier-protein]: step 2/2. In terms of biological role, catalyzes the radical-mediated insertion of two sulfur atoms into the C-6 and C-8 positions of the octanoyl moiety bound to the lipoyl domains of lipoate-dependent enzymes, thereby converting the octanoylated domains into lipoylated derivatives. The sequence is that of Lipoyl synthase, mitochondrial from Phaeosphaeria nodorum (strain SN15 / ATCC MYA-4574 / FGSC 10173) (Glume blotch fungus).